We begin with the raw amino-acid sequence, 197 residues long: Glycerol-3-phosphate acyltransferase (197 aa).

5 helical membrane passes run 1-21 (MDFIFPLISYLLGAIPFGLLI), 50-70 (LGFATLLCDSLKGFLPMVLAA), 82-102 (IVCLSGVMGVLGHMFPVYLGF), 112-132 (LGVFLFLSPAAIAISLGVFAA), and 159-179 (GASQLKIITAGFVALLIWIKH).

The protein belongs to the PlsY family. In terms of assembly, probably interacts with PlsX.

The protein resides in the cell inner membrane. It carries out the reaction an acyl phosphate + sn-glycerol 3-phosphate = a 1-acyl-sn-glycero-3-phosphate + phosphate. It participates in lipid metabolism; phospholipid metabolism. Catalyzes the transfer of an acyl group from acyl-phosphate (acyl-PO(4)) to glycerol-3-phosphate (G3P) to form lysophosphatidic acid (LPA). This enzyme utilizes acyl-phosphate as fatty acyl donor, but not acyl-CoA or acyl-ACP. The polypeptide is Glycerol-3-phosphate acyltransferase (Desulfotalea psychrophila (strain LSv54 / DSM 12343)).